Here is a 430-residue protein sequence, read N- to C-terminus: Adenylosuccinate synthetase (430 aa).

GTP is bound by residues 12–18 (GDEGKGK) and 40–42 (GHT). Residue D13 is the Proton acceptor of the active site. Mg(2+) is bound by residues D13 and G40. IMP-binding positions include 13 to 16 (DEGK), 38 to 41 (NAGH), T128, R142, Q223, T238, and R302. Residue H41 is the Proton donor of the active site. A substrate-binding site is contributed by 298 to 304 (TTTGRPR). GTP is bound by residues R304, 330-332 (SID), and 412-414 (SVG).

The protein belongs to the adenylosuccinate synthetase family. As to quaternary structure, homodimer. It depends on Mg(2+) as a cofactor.

It localises to the cytoplasm. The enzyme catalyses IMP + L-aspartate + GTP = N(6)-(1,2-dicarboxyethyl)-AMP + GDP + phosphate + 2 H(+). It participates in purine metabolism; AMP biosynthesis via de novo pathway; AMP from IMP: step 1/2. Its function is as follows. Plays an important role in the de novo pathway of purine nucleotide biosynthesis. Catalyzes the first committed step in the biosynthesis of AMP from IMP. The sequence is that of Adenylosuccinate synthetase from Streptococcus pyogenes serotype M1.